Consider the following 557-residue polypeptide: Dihydroxy-acid dehydratase (557 aa).

Asp-78 is a binding site for Mg(2+). Cys-119 lines the [2Fe-2S] cluster pocket. The Mg(2+) site is built by Asp-120 and Lys-121. An N6-carboxylysine modification is found at Lys-121. Cys-192 provides a ligand contact to [2Fe-2S] cluster. Residue Glu-442 participates in Mg(2+) binding. The active-site Proton acceptor is Ser-468.

Belongs to the IlvD/Edd family. Homodimer. Requires [2Fe-2S] cluster as cofactor. The cofactor is Mg(2+).

The enzyme catalyses (2R)-2,3-dihydroxy-3-methylbutanoate = 3-methyl-2-oxobutanoate + H2O. The catalysed reaction is (2R,3R)-2,3-dihydroxy-3-methylpentanoate = (S)-3-methyl-2-oxopentanoate + H2O. Its pathway is amino-acid biosynthesis; L-isoleucine biosynthesis; L-isoleucine from 2-oxobutanoate: step 3/4. It functions in the pathway amino-acid biosynthesis; L-valine biosynthesis; L-valine from pyruvate: step 3/4. Functionally, functions in the biosynthesis of branched-chain amino acids. Catalyzes the dehydration of (2R,3R)-2,3-dihydroxy-3-methylpentanoate (2,3-dihydroxy-3-methylvalerate) into 2-oxo-3-methylpentanoate (2-oxo-3-methylvalerate) and of (2R)-2,3-dihydroxy-3-methylbutanoate (2,3-dihydroxyisovalerate) into 2-oxo-3-methylbutanoate (2-oxoisovalerate), the penultimate precursor to L-isoleucine and L-valine, respectively. In Bacillus anthracis (strain A0248), this protein is Dihydroxy-acid dehydratase.